Consider the following 512-residue polypeptide: GMP synthase [glutamine-hydrolyzing] (512 aa).

Residues 7 to 197 (LVLVVDFGGQ…LFKVAGLKAD (191 aa)) form the Glutamine amidotransferase type-1 domain. Residue C84 is the Nucleophile of the active site. Catalysis depends on residues H171 and E173. The region spanning 198–387 (WSMASFAEEK…LGIPHKLVWR (190 aa)) is the GMPS ATP-PPase domain. 225–231 (SGGVDSS) is an ATP binding site.

As to quaternary structure, homodimer.

It catalyses the reaction XMP + L-glutamine + ATP + H2O = GMP + L-glutamate + AMP + diphosphate + 2 H(+). It participates in purine metabolism; GMP biosynthesis; GMP from XMP (L-Gln route): step 1/1. In terms of biological role, catalyzes the synthesis of GMP from XMP. This is GMP synthase [glutamine-hydrolyzing] from Clostridium novyi (strain NT).